Reading from the N-terminus, the 28-residue chain is Ornatin-D (28 aa).

It belongs to the ornatin family.

It localises to the secreted. Its function is as follows. Potent inhibitor of fibrinogen interaction with platelet receptors expressed on glycoprotein IIb-IIIa complex. May prevent blood from clotting during either feeding and/or storage of ingested blood. The sequence is that of Ornatin-D from Placobdella ornata (Turtle leech).